Consider the following 551-residue polypeptide: Glutamate--tRNA ligase (551 aa).

Positions 100–110 (PNPNGPPTLGS) match the 'HIGH' region motif.

This sequence belongs to the class-I aminoacyl-tRNA synthetase family. Glutamate--tRNA ligase type 2 subfamily.

The protein localises to the cytoplasm. The enzyme catalyses tRNA(Glu) + L-glutamate + ATP = L-glutamyl-tRNA(Glu) + AMP + diphosphate. In terms of biological role, catalyzes the attachment of glutamate to tRNA(Glu) in a two-step reaction: glutamate is first activated by ATP to form Glu-AMP and then transferred to the acceptor end of tRNA(Glu). The chain is Glutamate--tRNA ligase from Archaeoglobus fulgidus (strain ATCC 49558 / DSM 4304 / JCM 9628 / NBRC 100126 / VC-16).